Here is a 478-residue protein sequence, read N- to C-terminus: Geranial dehydrogenase (478 aa).

230 to 235 (GSTSAG) is a binding site for NAD(+). Catalysis depends on E252, which acts as the Proton acceptor. The active-site Nucleophile is the C286.

This sequence belongs to the aldehyde dehydrogenase family.

It catalyses the reaction (2E)-geranial + NAD(+) + H2O = geranate + NADH + 2 H(+). The enzyme catalyses perillyl aldehyde + NAD(+) + H2O = perillate + NADH + 2 H(+). The protein operates within terpene metabolism; monoterpene degradation. Its function is as follows. Involved in the degradation of the monoterpenes beta-myrcene and limonene. During anaerobic degradation of beta-myrcene, catalyzes the NAD(+)-dependent oxidation of geranial to geranic acid. Seems to be specific for the trans-isomer geranial, since it does not act on the cis-isomer neral. During degradation of limonene, catalyzes the NAD(+)-dependent conversion of perillyl aldehyde to perrilic acid. This Castellaniella defragrans (strain DSM 12143 / CCUG 39792 / 65Phen) (Alcaligenes defragrans) protein is Geranial dehydrogenase.